Consider the following 65-residue polypeptide: Large ribosomal subunit protein bL35 (65 aa).

The interval 1–28 is disordered; it reads MPKLKTRKAAARRFKATGSGKIKRRKAF.

The protein belongs to the bacterial ribosomal protein bL35 family.

The chain is Large ribosomal subunit protein bL35 from Trichodesmium erythraeum (strain IMS101).